The primary structure comprises 218 residues: uncharacterized protein (218 aa).

The segment covering 184–202 (MDREEKRKEKEEKRKRELA) has biased composition (basic and acidic residues). Residues 184-218 (MDREEKRKEKEEKRKRELAARQLKRQEKKKQKTSK) are disordered. A compositionally biased stretch (basic residues) spans 205–218 (QLKRQEKKKQKTSK).

This is an uncharacterized protein from Mycoplasma pneumoniae (strain ATCC 29342 / M129 / Subtype 1) (Mycoplasmoides pneumoniae).